A 380-amino-acid chain; its full sequence is MAPNLRKSHPLLKMVNNSLIDLPTPPNISAWWNFGSLLGICLMTQILTGLLLAMHYTADTTLAFSSVAHTCRNVQYGWLIRNLHANGASFFFICIYLHIGRGFYYGSYLYKETWNTGVILLLTLMATAFVGYVLPWGQMSFWGATVITNLFSAIPYIGQTLVEWAWGGFSVDNPTLTRFFALHFLLPFMIAGLTLVHLTFLHESGSNNPLGIVSNCDKIPFHPYFTLKDILGFTLMFLLLTTLALFSPNLLGDPENFTPANPLVTPPHIKPEWYFLFAYAILRSIPNKLGGVLALAASVLILFLAPFLHKAKQRAMTFRPLSQLLFWVLVANLFILTWVGSQPVEHPFIIIGQLASFTYFTILLILFPIIGALENKMLNY.

Transmembrane regions (helical) follow at residues 34-54 (FGSL…LLAM), 78-99 (WLIR…YLHI), 114-134 (WNTG…GYVL), and 179-199 (FFAL…VHLT). The heme b site is built by His84 and His98. Heme b is bound by residues His183 and His197. His202 is a binding site for a ubiquinone. Helical transmembrane passes span 227-247 (LKDI…ALFS), 289-309 (LGGV…PFLH), 321-341 (LSQL…WVGS), and 348-368 (FIII…ILFP).

This sequence belongs to the cytochrome b family. The cytochrome bc1 complex contains 11 subunits: 3 respiratory subunits (MT-CYB, CYC1 and UQCRFS1), 2 core proteins (UQCRC1 and UQCRC2) and 6 low-molecular weight proteins (UQCRH/QCR6, UQCRB/QCR7, UQCRQ/QCR8, UQCR10/QCR9, UQCR11/QCR10 and a cleavage product of UQCRFS1). This cytochrome bc1 complex then forms a dimer. Heme b serves as cofactor.

The protein resides in the mitochondrion inner membrane. In terms of biological role, component of the ubiquinol-cytochrome c reductase complex (complex III or cytochrome b-c1 complex) that is part of the mitochondrial respiratory chain. The b-c1 complex mediates electron transfer from ubiquinol to cytochrome c. Contributes to the generation of a proton gradient across the mitochondrial membrane that is then used for ATP synthesis. This Procellaria westlandica (Westland petrel) protein is Cytochrome b (MT-CYB).